Here is a 353-residue protein sequence, read N- to C-terminus: Heat-inducible transcription repressor HrcA (353 aa).

Belongs to the HrcA family.

Its function is as follows. Negative regulator of class I heat shock genes (grpE-dnaK-dnaJ and groELS operons). Prevents heat-shock induction of these operons. This is Heat-inducible transcription repressor HrcA from Anaeromyxobacter dehalogenans (strain 2CP-1 / ATCC BAA-258).